A 601-amino-acid polypeptide reads, in one-letter code: Elongation factor 4 (601 aa).

A tr-type G domain is found at 8–189 (EQIRNFGIIA…LIVRKAPPPK (182 aa)). 20–25 (DHGKST) is a binding site for GTP.

Belongs to the TRAFAC class translation factor GTPase superfamily. Classic translation factor GTPase family. LepA subfamily.

It is found in the cell membrane. The catalysed reaction is GTP + H2O = GDP + phosphate + H(+). In terms of biological role, required for accurate and efficient protein synthesis under certain stress conditions. May act as a fidelity factor of the translation reaction, by catalyzing a one-codon backward translocation of tRNAs on improperly translocated ribosomes. Back-translocation proceeds from a post-translocation (POST) complex to a pre-translocation (PRE) complex, thus giving elongation factor G a second chance to translocate the tRNAs correctly. Binds to ribosomes in a GTP-dependent manner. This chain is Elongation factor 4, found in Tropheryma whipplei (strain Twist) (Whipple's bacillus).